Consider the following 345-residue polypeptide: Gibberellin 2-beta-dioxygenase 2 (345 aa).

The region spanning 170 to 285 (HSDSLLRINH…RMSMMYFAAP (116 aa)) is the Fe2OG dioxygenase domain. 3 residues coordinate Fe cation: His-209, Asp-211, and His-266. Arg-276 is a catalytic residue.

This sequence belongs to the iron/ascorbate-dependent oxidoreductase family. GA2OX subfamily. The cofactor is Fe cation. In terms of tissue distribution, predominantly expressed in leaves.

It carries out the reaction gibberellin A1 + 2-oxoglutarate + O2 = gibberellin A8 + succinate + CO2. It functions in the pathway plant hormone biosynthesis; gibberellin biosynthesis. Functionally, catalyzes the 2-beta-hydroxylation of several biologically active gibberellins, leading to the homeostatic regulation of their endogenous level. Catabolism of gibberellins (GAs) plays a central role in plant development. Converts GA9/GA20 to GA51/GA29 and GA4/GA1 to GA34/GA8. This chain is Gibberellin 2-beta-dioxygenase 2 (GA2OX2), found in Pisum sativum (Garden pea).